The chain runs to 909 residues: Protein translocase subunit SecA (909 aa).

ATP-binding positions include Gln87, 105–109 (GEGKT), and Asp514. Positions 879–909 (TPVQGGPKVGRNDPCPCGSGKKYKHCHGKLS) are disordered. Positions 893, 895, 904, and 905 each coordinate Zn(2+). Residues 899 to 909 (KKYKHCHGKLS) show a composition bias toward basic residues.

This sequence belongs to the SecA family. Monomer and homodimer. Part of the essential Sec protein translocation apparatus which comprises SecA, SecYEG and auxiliary proteins SecDF-YajC and YidC. Zn(2+) serves as cofactor.

Its subcellular location is the cell inner membrane. The protein localises to the cytoplasm. The catalysed reaction is ATP + H2O + cellular proteinSide 1 = ADP + phosphate + cellular proteinSide 2.. In terms of biological role, part of the Sec protein translocase complex. Interacts with the SecYEG preprotein conducting channel. Has a central role in coupling the hydrolysis of ATP to the transfer of proteins into and across the cell membrane, serving both as a receptor for the preprotein-SecB complex and as an ATP-driven molecular motor driving the stepwise translocation of polypeptide chains across the membrane. The polypeptide is Protein translocase subunit SecA (Azoarcus sp. (strain BH72)).